A 229-amino-acid chain; its full sequence is 2-C-methyl-D-erythritol 4-phosphate cytidylyltransferase (229 aa).

This sequence belongs to the IspD/TarI cytidylyltransferase family. IspD subfamily.

The enzyme catalyses 2-C-methyl-D-erythritol 4-phosphate + CTP + H(+) = 4-CDP-2-C-methyl-D-erythritol + diphosphate. Its pathway is isoprenoid biosynthesis; isopentenyl diphosphate biosynthesis via DXP pathway; isopentenyl diphosphate from 1-deoxy-D-xylulose 5-phosphate: step 2/6. In terms of biological role, catalyzes the formation of 4-diphosphocytidyl-2-C-methyl-D-erythritol from CTP and 2-C-methyl-D-erythritol 4-phosphate (MEP). The polypeptide is 2-C-methyl-D-erythritol 4-phosphate cytidylyltransferase (Bacillus pumilus (strain SAFR-032)).